The sequence spans 377 residues: Alternative oxidase, mitochondrial (377 aa).

Residues 149–169 form a helical membrane-spanning segment; that stretch reads LSRFIFLESIAAVPGMVAGML. The Fe cation site is built by Glu-156, Glu-195, and His-198. A helical membrane pass occupies residues 214 to 234; the sequence is ILIIGAQGVYFNAMFVAYLIS. Fe cation-binding residues include Glu-246, Glu-303, and His-306.

Belongs to the alternative oxidase family. It depends on Fe cation as a cofactor.

It localises to the mitochondrion inner membrane. In terms of biological role, catalyzes cyanide-resistant oxygen consumption. May increase respiration when the cytochrome respiratory pathway is restricted, or in response to low temperatures. The chain is Alternative oxidase, mitochondrial (AOX1) from Pyricularia oryzae (strain 70-15 / ATCC MYA-4617 / FGSC 8958) (Rice blast fungus).